We begin with the raw amino-acid sequence, 176 residues long: Large ribosomal subunit protein uL30 (176 aa).

The protein belongs to the universal ribosomal protein uL30 family. As to quaternary structure, part of the 50S ribosomal subunit.

This chain is Large ribosomal subunit protein uL30, found in Pyrobaculum arsenaticum (strain DSM 13514 / JCM 11321 / PZ6).